A 342-amino-acid polypeptide reads, in one-letter code: Serpentine receptor class delta-33 (342 aa).

7 consecutive transmembrane segments (helical) span residues 26–46 (IFVI…LLLL), 62–82 (IFLA…VTSM), 112–132 (YVGI…SMIY), 148–168 (IILC…CSNI), 205–225 (LIIL…VMYW), 261–281 (IIPL…QLGF), and 287–307 (YSYF…VVTI).

The protein belongs to the nematode receptor-like protein srd family.

The protein localises to the membrane. The protein is Serpentine receptor class delta-33 (srd-33) of Caenorhabditis elegans.